We begin with the raw amino-acid sequence, 788 residues long: 5-methyltetrahydropteroyltriglutamate--homocysteine methyltransferase (788 aa).

Residues R24 to K27 and K140 contribute to the 5-methyltetrahydropteroyltri-L-glutamate site. L-homocysteine-binding positions include I463 to S465 and E516. L-methionine is bound by residues I463 to S465 and E516. 5-methyltetrahydropteroyltri-L-glutamate contacts are provided by residues R547–C548 and W593. D631 is an L-homocysteine binding site. D631 serves as a coordination point for L-methionine. E637 is a 5-methyltetrahydropteroyltri-L-glutamate binding site. Positions 673, 675, and 697 each coordinate Zn(2+). H726 acts as the Proton donor in catalysis. C758 is a binding site for Zn(2+).

It belongs to the vitamin-B12 independent methionine synthase family. Zn(2+) serves as cofactor.

The catalysed reaction is 5-methyltetrahydropteroyltri-L-glutamate + L-homocysteine = tetrahydropteroyltri-L-glutamate + L-methionine. It functions in the pathway amino-acid biosynthesis; L-methionine biosynthesis via de novo pathway; L-methionine from L-homocysteine (MetE route): step 1/1. In terms of biological role, catalyzes the transfer of a methyl group from 5-methyltetrahydrofolate to homocysteine resulting in methionine formation. The chain is 5-methyltetrahydropteroyltriglutamate--homocysteine methyltransferase from Rhodopseudomonas palustris (strain ATCC BAA-98 / CGA009).